Consider the following 444-residue polypeptide: Xylose isomerase (444 aa).

Catalysis depends on residues H101 and D104. 7 residues coordinate Mg(2+): E232, E268, H271, D296, D307, D309, and D339.

This sequence belongs to the xylose isomerase family. Homotetramer. It depends on Mg(2+) as a cofactor.

Its subcellular location is the cytoplasm. The catalysed reaction is alpha-D-xylose = alpha-D-xylulofuranose. The chain is Xylose isomerase from Thermotoga petrophila (strain ATCC BAA-488 / DSM 13995 / JCM 10881 / RKU-1).